A 1070-amino-acid chain; its full sequence is MYCCSAQDSKMDYKRRFLLGGSKQKVQQHQQYPMPELGRALSAPLASTATTAPLGSLTAAGSCHHAMPHTTPIADIQQGISKYLDALNVFCRASTFLTDLFSTVFRNSHYSKAATQLKDVQEHVMEAASRLTSAIKPEIAKMLMELSAGAANFTDQKEFSLQDIEVLGRCFLTVVQVHFQFLTHALQKVQPVAHSCFAEVIVPEKKNSGSGGGLSGMGHTPEVEEAVRSWRGAAEATSRLRERGCDGCLAGIEVQQLFCSQSAAIPEHQLKELNIKIDSALQAYKIALESLGHCEYAMKAGFHLNPKAIEASLQGCCSEAEAQQTGRRQTPPQPMQCELPTVPVQIGSHFLKGVSFNESAADNLKLKTHTMLQLMKEAGCYNGITSRDDFPVTEVLNQVCPSTWRGACKTAVQLLFGQAGLVVVDTAQIENKEAYAPQISLEGSRIVVQVPSTWCLKEDPATMSLLQRSLDPEKTLGLVDVLYTAVLDLNRWRAGREQALPCIQIQLQREICDFGNQADLPSGNGNKSSGGLQKTFSKLTSRFTKKASCTSSSSSTNYSIQNTPSKNIFIAGCSEEKAKMPGNIDTRLQSILNIGNFPRTTDPSQSAQNSSNTVANGFLMERRENFLHGDDGKDEKGMNLPTDQEMQEVIDFLSGFNMGQSHQGSPLVTRHNSAATAMVTEQKAGAMQPQQPSLPVPPPPRAPQAGAHTPLTPQPGLAPQQQSPKQQQPQVQYYQHLLQPIGPQQPPPQPRAPGKWVHGSSQQPAQAVGAGLSPLGQWPGISDLSSDLYSLGLVSSYMDNVMSEVLGQKPQGPRNNTWPNRDQSDGVFGMLGEILPFDPAVGSDPEFARYVAGVSQAMQQKRQAQHGRRPGNPRGNWPPMDDAHRTWPFPEFFTEGDGLHGGWSGAQGDSASSSDETSSANGDSLFSMFSGPDLVAAVKQRRKHSSGEQDTSTLPSPPLLTTVEDVNQDNKTKTWPPKAPWQHPSPLPSTLPSPSAPLYAVTSPGSQWNDTMQMLQSPVWAATNDCSAAAFSYVQTPPQPPPPPAHKAAPKGFKAFPGKGERRPAYLPQY.

Disordered stretches follow at residues 681–771 (EQKA…VGAG), 855–992 (SQAM…STLP), and 1032–1070 (SYVQ…LPQY). Residues 692–702 (PSLPVPPPPRA) show a composition bias toward pro residues. Composition is skewed to low complexity over residues 719-742 (PQQQ…QPIG), 906-924 (AQGD…NGDS), and 951-962 (TSTLPSPPLLTT). Ser-723 is subject to Phosphoserine. The segment covering 977–992 (PKAPWQHPSPLPSTLP) has biased composition (pro residues). Residues 1046–1058 (HKAAPKGFKAFPG) show a composition bias toward low complexity.

Interacts with AGO2 and TNRC6A.

It is found in the cytoplasm. It localises to the P-body. Its function is as follows. Acts as an effector of RAC1. Associates with CCR4-NOT complex which is one of the major cellular mRNA deadenylases and is linked to various cellular processes including bulk mRNA degradation, miRNA-mediated repression, translational repression during translational initiation and general transcription regulation. May also play a role in miRNA silencing machinery. In Homo sapiens (Human), this protein is Granule associated Rac and RHOG effector protein 1.